The following is a 489-amino-acid chain: Putative general secretion pathway protein A (489 aa).

26–33 (GEAGSGKT) provides a ligand contact to ATP. Residues 237 to 257 (MQLAVVMSGTIIALTCGWLLL) form a helical membrane-spanning segment.

It belongs to the ExeA family.

Its subcellular location is the cell membrane. Functionally, may play a regulatory role under conditions of derepressed gsp gene expression. In Escherichia coli (strain K12), this protein is Putative general secretion pathway protein A (gspA).